We begin with the raw amino-acid sequence, 430 residues long: 3-phosphoshikimate 1-carboxyvinyltransferase (430 aa).

3-phosphoshikimate is bound by residues K33, S34, and R38. Phosphoenolpyruvate is bound at residue K33. Phosphoenolpyruvate contacts are provided by G101 and R129. 3-phosphoshikimate is bound by residues S172, S173, Q174, S201, E319, and H346. A phosphoenolpyruvate-binding site is contributed by Q174. The active-site Proton acceptor is the E319. The phosphoenolpyruvate site is built by R350, R391, and K416.

It belongs to the EPSP synthase family. Monomer.

It is found in the cytoplasm. The catalysed reaction is 3-phosphoshikimate + phosphoenolpyruvate = 5-O-(1-carboxyvinyl)-3-phosphoshikimate + phosphate. It functions in the pathway metabolic intermediate biosynthesis; chorismate biosynthesis; chorismate from D-erythrose 4-phosphate and phosphoenolpyruvate: step 6/7. Its function is as follows. Catalyzes the transfer of the enolpyruvyl moiety of phosphoenolpyruvate (PEP) to the 5-hydroxyl of shikimate-3-phosphate (S3P) to produce enolpyruvyl shikimate-3-phosphate and inorganic phosphate. The chain is 3-phosphoshikimate 1-carboxyvinyltransferase from Corynebacterium glutamicum (strain ATCC 13032 / DSM 20300 / JCM 1318 / BCRC 11384 / CCUG 27702 / LMG 3730 / NBRC 12168 / NCIMB 10025 / NRRL B-2784 / 534).